The primary structure comprises 164 residues: NAD(P)H-quinone oxidoreductase subunit I, chloroplastic (164 aa).

4Fe-4S ferredoxin-type domains lie at 55–84 and 95–124; these read GRIHFEFDKCIACEVCVRVCPIDLPVVDWK and LNYSIDFGICIFCGNCVEYCPTNCLSMTEE. Residues Cys-64, Cys-67, Cys-70, Cys-74, Cys-104, Cys-107, Cys-110, and Cys-114 each coordinate [4Fe-4S] cluster.

It belongs to the complex I 23 kDa subunit family. In terms of assembly, NDH is composed of at least 16 different subunits, 5 of which are encoded in the nucleus. Requires [4Fe-4S] cluster as cofactor.

It localises to the plastid. The protein resides in the chloroplast thylakoid membrane. It carries out the reaction a plastoquinone + NADH + (n+1) H(+)(in) = a plastoquinol + NAD(+) + n H(+)(out). The catalysed reaction is a plastoquinone + NADPH + (n+1) H(+)(in) = a plastoquinol + NADP(+) + n H(+)(out). NDH shuttles electrons from NAD(P)H:plastoquinone, via FMN and iron-sulfur (Fe-S) centers, to quinones in the photosynthetic chain and possibly in a chloroplast respiratory chain. The immediate electron acceptor for the enzyme in this species is believed to be plastoquinone. Couples the redox reaction to proton translocation, and thus conserves the redox energy in a proton gradient. The polypeptide is NAD(P)H-quinone oxidoreductase subunit I, chloroplastic (Daucus carota (Wild carrot)).